A 54-amino-acid polypeptide reads, in one-letter code: Photosystem II reaction center protein K (54 aa).

Residues 1 to 17 (MSFENFAIITLKENVFA) constitute a propeptide that is removed on maturation. The helical transmembrane segment at 33 to 53 (LPIIPVLFLLLAFVWQSAVKF) threads the bilayer.

The protein belongs to the PsbK family. PSII is composed of 1 copy each of membrane proteins PsbA, PsbB, PsbC, PsbD, PsbE, PsbF, PsbH, PsbI, PsbJ, PsbK, PsbL, PsbM, PsbT, PsbY, PsbZ, Psb30/Ycf12, at least 3 peripheral proteins of the oxygen-evolving complex and a large number of cofactors. It forms dimeric complexes.

Its subcellular location is the plastid. It is found in the chloroplast thylakoid membrane. In terms of biological role, one of the components of the core complex of photosystem II (PSII). PSII is a light-driven water:plastoquinone oxidoreductase that uses light energy to abstract electrons from H(2)O, generating O(2) and a proton gradient subsequently used for ATP formation. It consists of a core antenna complex that captures photons, and an electron transfer chain that converts photonic excitation into a charge separation. The polypeptide is Photosystem II reaction center protein K (Euglena deses).